Reading from the N-terminus, the 638-residue chain is 1-deoxy-D-xylulose-5-phosphate synthase (638 aa).

Thiamine diphosphate is bound by residues His-76 and 117–119 (AHS). Asp-148 lines the Mg(2+) pocket. Thiamine diphosphate-binding positions include 149–150 (GS), Asn-177, Tyr-287, and Glu-369. Asn-177 serves as a coordination point for Mg(2+).

It belongs to the transketolase family. DXPS subfamily. As to quaternary structure, homodimer. The cofactor is Mg(2+). It depends on thiamine diphosphate as a cofactor.

The catalysed reaction is D-glyceraldehyde 3-phosphate + pyruvate + H(+) = 1-deoxy-D-xylulose 5-phosphate + CO2. It participates in metabolic intermediate biosynthesis; 1-deoxy-D-xylulose 5-phosphate biosynthesis; 1-deoxy-D-xylulose 5-phosphate from D-glyceraldehyde 3-phosphate and pyruvate: step 1/1. Its function is as follows. Catalyzes the acyloin condensation reaction between C atoms 2 and 3 of pyruvate and glyceraldehyde 3-phosphate to yield 1-deoxy-D-xylulose-5-phosphate (DXP). The chain is 1-deoxy-D-xylulose-5-phosphate synthase from Rhodopseudomonas palustris (strain BisB5).